The primary structure comprises 469 residues: Neuraminidase (469 aa).

The Intravirion portion of the chain corresponds to 1–6 (MNPNQK). A helical transmembrane segment spans residues 7–27 (IITIGSICMVVGIISLILQIG). Positions 11-33 (GSICMVVGIISLILQIGNIISIW) are involved in apical transport and lipid raft association. The Virion surface portion of the chain corresponds to 28–469 (NIISIWISHS…GAELPFTIDK (442 aa)). The segment at 36-90 (HSIQTGSQNHTGICNQSIITYKNSTWVNQTYVNISNTNVVAGKGTTPVILAGNSS) is hypervariable stalk region. Residues Asn44, Asn50, Asn58, Asn63, Asn68, and Asn88 are each glycosylated (N-linked (GlcNAc...) asparagine; by host). Residues 91-469 (LCPIRGWAIY…GAELPFTIDK (379 aa)) are head of neuraminidase. 8 disulfides stabilise this stretch: Cys92-Cys417, Cys124-Cys129, Cys184-Cys231, Cys233-Cys238, Cys279-Cys292, Cys281-Cys290, Cys318-Cys335, and Cys421-Cys446. Residue Arg118 coordinates substrate. Asn146 is a glycosylation site (N-linked (GlcNAc...) asparagine; by host). The active-site Proton donor/acceptor is Asp151. Arg152 provides a ligand contact to substrate. Asn235 carries N-linked (GlcNAc...) asparagine; by host glycosylation. 277–278 (EE) contributes to the substrate binding site. Residue Arg293 participates in substrate binding. 4 residues coordinate Ca(2+): Asp294, Gly298, Asp324, and Asn344. N-linked (GlcNAc...) asparagine; by host glycosylation occurs at Asn365. Residue Arg368 coordinates substrate. Residue Tyr402 is the Nucleophile of the active site.

The protein belongs to the glycosyl hydrolase 34 family. As to quaternary structure, homotetramer. It depends on Ca(2+) as a cofactor. In terms of processing, N-glycosylated.

The protein resides in the virion membrane. It localises to the host apical cell membrane. The enzyme catalyses Hydrolysis of alpha-(2-&gt;3)-, alpha-(2-&gt;6)-, alpha-(2-&gt;8)- glycosidic linkages of terminal sialic acid residues in oligosaccharides, glycoproteins, glycolipids, colominic acid and synthetic substrates.. With respect to regulation, inhibited by the neuraminidase inhibitors zanamivir (Relenza) and oseltamivir (Tamiflu). These drugs interfere with the release of progeny virus from infected cells and are effective against all influenza strains. Resistance to neuraminidase inhibitors is quite rare. Catalyzes the removal of terminal sialic acid residues from viral and cellular glycoconjugates. Cleaves off the terminal sialic acids on the glycosylated HA during virus budding to facilitate virus release. Additionally helps virus spread through the circulation by further removing sialic acids from the cell surface. These cleavages prevent self-aggregation and ensure the efficient spread of the progeny virus from cell to cell. Otherwise, infection would be limited to one round of replication. Described as a receptor-destroying enzyme because it cleaves a terminal sialic acid from the cellular receptors. May facilitate viral invasion of the upper airways by cleaving the sialic acid moieties on the mucin of the airway epithelial cells. Likely to plays a role in the budding process through its association with lipid rafts during intracellular transport. May additionally display a raft-association independent effect on budding. Plays a role in the determination of host range restriction on replication and virulence. Sialidase activity in late endosome/lysosome traffic seems to enhance virus replication. The sequence is that of Neuraminidase from Influenza A virus (strain A/USA:Huston/AA/1945 H1N1).